The following is a 348-amino-acid chain: Dihydroorotase (348 aa).

The Zn(2+) site is built by His-17 and His-19. Substrate-binding positions include 19–21 and Asn-45; that span reads HLR. Positions 103, 140, and 178 each coordinate Zn(2+). The residue at position 103 (Lys-103) is an N6-carboxylysine. Position 140 (His-140) interacts with substrate. Leu-223 is a binding site for substrate. Asp-251 provides a ligand contact to Zn(2+). The active site involves Asp-251. Substrate is bound by residues His-255 and Ala-267.

It belongs to the metallo-dependent hydrolases superfamily. DHOase family. Class II DHOase subfamily. In terms of assembly, homodimer. The cofactor is Zn(2+).

It catalyses the reaction (S)-dihydroorotate + H2O = N-carbamoyl-L-aspartate + H(+). It functions in the pathway pyrimidine metabolism; UMP biosynthesis via de novo pathway; (S)-dihydroorotate from bicarbonate: step 3/3. Its function is as follows. Catalyzes the reversible cyclization of carbamoyl aspartate to dihydroorotate. The protein is Dihydroorotase of Shigella flexneri serotype 5b (strain 8401).